Reading from the N-terminus, the 645-residue chain is MNKQQKEFKSFYSIRKSSLGVASVAISTLLLLMSNGEAQAAAEETGGTNTEAQPKTEAVASPTTTSEKAPETKPVANAVSVSNKEVEAPTSETKEAKEVKEVKAPKETKEVKPAAKATNNTYPILNQELREAIKNPAIKDKDHSAPNSRPIDFEMKKKDGTQQFYHYASSVKPARVIFTDSKPEIELGLQSGQFWRKFEVYEGDKKLPIKLVSYDTVKDYAYIRFSVSNGTKAVKIVSSTHFNNKEEKYDYTLMEFAQPIYNSADKFKTEEDYKAEKLLAPYKKAKTLERQVYELNKIQDKLPEKLKAEYKKKLEDTKKALDEQVKSAITEFQKVQPTNEKMTDLQDTKYVVYESVENNESMMDTFVKHPIKTGMLNGKKYMVMETTNDDYWKDFMVEGQRVRTISKDAKNNTRTIIFPYVEGKTLYDAIVKVHVKTIDYDGQYHVRIVDKEAFTKANTDKSNKKEQQDNSAKKEATPATPSKPTPSPVEKESQKQDSQKDDNKQLPSVEKENDASSESGKDKTPATKPTKGEVESSSTTPTKVVSTTQNVAKPTTASSKTTKDVVQTSAGSSEAKDSAPLQKANIKNTNDGHTQSQNNKNTQENKAKSLPQTGEESNKDMTLPLMALLALSSIVAFVLPRKRKN.

Positions Met1–Ala40 are cleaved as a signal peptide. The YSIRK-G/S signaling motif motif lies at Tyr12–Ser23. Low complexity predominate over residues Ala38–Gln53. Residues Ala38–Pro113 form a disordered region. Residues Lys84–Pro113 are compositionally biased toward basic and acidic residues. 2 consecutive NEAT domains span residues Ser144 to Thr269 and Lys341 to Asn458. The heme site is built by Met362 and Tyr440. Composition is skewed to basic and acidic residues over residues Asn458–Ala476 and Val489–Val534. The tract at residues Asn458–Lys619 is disordered. Over residues Glu535–Lys560 the composition is skewed to low complexity. The span at Asn585 to Glu615 shows a compositional bias: polar residues. Residues Leu610–Gly614 carry the LPXTG sorting signal motif. At Thr613 the chain carries Pentaglycyl murein peptidoglycan amidated threonine. A propeptide spans Gly614–Asn645 (removed by sortase).

Belongs to the IsdB family. As to quaternary structure, interacts with host HBA; this interaction allows heme extraction as iron source. Interacts with IsdA.

Its subcellular location is the secreted. It is found in the cell wall. Functionally, cell wall-anchored surface receptor that extracts heme from oxidized metHb to enable growth on hemoglobin as a sole iron source. Rapidly extracts heme from hemoglobin and transfers it to IsdA or IsdC, which then relays it to the membrane transporter/IsdEF for internalization. Also promotes resistance to hydrogen peroxide and killing by neutrophils. The polypeptide is Iron-regulated surface determinant protein B (isdB) (Staphylococcus aureus (strain MSSA476)).